We begin with the raw amino-acid sequence, 141 residues long: Hemoglobin subunit alpha (141 aa).

One can recognise a Globin domain in the interval 1-141; the sequence is VLSSADKANI…VSTVLTSKYR (141 aa). S3 is modified (phosphoserine). N6-succinyllysine is present on residues K7 and K11. K16 bears the N6-acetyllysine; alternate mark. Position 16 is an N6-succinyllysine; alternate (K16). The residue at position 24 (Y24) is a Phosphotyrosine. An N6-succinyllysine modification is found at K40. S49 carries the post-translational modification Phosphoserine. H58 contacts O2. Position 87 (H87) interacts with heme b. S102 bears the Phosphoserine mark. Phosphothreonine is present on T108. A phosphoserine mark is found at S124 and S131. Phosphothreonine is present on residues T134 and T137. S138 is modified (phosphoserine).

Belongs to the globin family. Heterotetramer of two alpha chains and two beta chains. As to expression, red blood cells.

In terms of biological role, involved in oxygen transport from the lung to the various peripheral tissues. Hemopressin acts as an antagonist peptide of the cannabinoid receptor CNR1. Hemopressin-binding efficiently blocks cannabinoid receptor CNR1 and subsequent signaling. The protein is Hemoglobin subunit alpha (HBA) of Proteles cristata (Aardwolf).